A 496-amino-acid polypeptide reads, in one-letter code: Cytochrome P450 71D179 (496 aa).

Residues 1–21 (MDISISWVVIIVSVLSYLILM) traverse the membrane as a helical; Signal-anchor for type II membrane protein segment. C435 is a heme binding site.

Belongs to the cytochrome P450 family. The cofactor is heme.

The protein resides in the membrane. Its pathway is secondary metabolite biosynthesis; terpenoid biosynthesis. Its function is as follows. Involved in the biosynthesis of phenolic monoterpenes natural products thymol and carvacrol which have a broad range of biological activities acting as antimicrobial compounds, insecticides, antioxidants and pharmaceutical agents. Catalyzes probably the C3-hydroxylation of gamma-terpinene to produce thymol. The sequence is that of Cytochrome P450 71D179 from Thymus vulgaris (Thyme).